The chain runs to 392 residues: Cell division protein FtsZ (392 aa).

GTP-binding positions include 24–28 (GGGCN), 111–113 (GTG), Glu142, Arg145, and Asp189.

This sequence belongs to the FtsZ family. Homodimer. Polymerizes to form a dynamic ring structure in a strictly GTP-dependent manner. Interacts directly with several other division proteins.

It is found in the cytoplasm. In terms of biological role, essential cell division protein that forms a contractile ring structure (Z ring) at the future cell division site. The regulation of the ring assembly controls the timing and the location of cell division. One of the functions of the FtsZ ring is to recruit other cell division proteins to the septum to produce a new cell wall between the dividing cells. Binds GTP and shows GTPase activity. This Neisseria meningitidis serogroup A / serotype 4A (strain DSM 15465 / Z2491) protein is Cell division protein FtsZ.